Reading from the N-terminus, the 522-residue chain is MSNRVIIFDTTLRDGEQALAASLSVKEKLQIAMALERLGVDVMEVGFPVSSPGDFESVQTIARTIKNSRVCALSRALEKDIDAAAQALSVAEQFRIHTFISTSTIHVESKLKRSFEQVLEMAVGAVKYARRFTDDVEFSCEDAGRTPIDNLCRMVEAAIHAGARTINIPDTVGYTVPSEFGSIIQTLFNRVPNIDQAIISVHCHDDLGLSVANSITAVQHGARQIECTMNGIGERAGNCSLEEIAMILATRKNLLGFETGINAKEIHRTSNLVSQLCNMPIQSNKAIVGANAFTHSSGIHQDGMLKAQNTYEIMTPESIGLNRNNLNMTSRSGRHVIKHRMEEMGYSSQDYNLDALYEQFLHLADKKGQVFDYDLEALAFIEAQAAEDNFYQLRQLVVQSDSTEGVATATVRIEVGGEIKTEAATGNGPVDAAYNAIARATDRRIDIISYKLGAKGVGQDALGQVDITAVYHEQNFHGVGLATDVVEASARALVHVMNLTCRADKVADYKQNMHKNRELGGV.

A Pyruvate carboxyltransferase domain is found at 5 to 267 (VIIFDTTLRD…ETGINAKEIH (263 aa)). Residues aspartate 14, histidine 202, histidine 204, and asparagine 238 each contribute to the Mn(2+) site. The tract at residues 392-522 (QLRQLVVQSD…MHKNRELGGV (131 aa)) is regulatory domain.

This sequence belongs to the alpha-IPM synthase/homocitrate synthase family. LeuA type 1 subfamily. As to quaternary structure, homodimer. It depends on Mn(2+) as a cofactor.

It is found in the cytoplasm. It carries out the reaction 3-methyl-2-oxobutanoate + acetyl-CoA + H2O = (2S)-2-isopropylmalate + CoA + H(+). Its pathway is amino-acid biosynthesis; L-leucine biosynthesis; L-leucine from 3-methyl-2-oxobutanoate: step 1/4. In terms of biological role, catalyzes the condensation of the acetyl group of acetyl-CoA with 3-methyl-2-oxobutanoate (2-ketoisovalerate) to form 3-carboxy-3-hydroxy-4-methylpentanoate (2-isopropylmalate). This is 2-isopropylmalate synthase from Shewanella oneidensis (strain ATCC 700550 / JCM 31522 / CIP 106686 / LMG 19005 / NCIMB 14063 / MR-1).